Here is a 366-residue protein sequence, read N- to C-terminus: 5-hydroxytryptamine receptor 1F (366 aa).

Residues 1 to 24 (MDFLNSSDQNLTSEELLNRMPSKI) are Extracellular-facing. 2 N-linked (GlcNAc...) asparagine glycosylation sites follow: asparagine 5 and asparagine 10. Residues 25-49 (LVSLTLSGLALMTTTINSLVIAAII) traverse the membrane as a helical segment. The Cytoplasmic segment spans residues 50–59 (VTRKLHHPAN). The helical transmembrane segment at 60–81 (YLICSLAVTDFLVAVLVMPFSI) threads the bilayer. Over 82–96 (VYIVRESWIMGQVVC) the chain is Extracellular. Cysteines 96 and 172 form a disulfide. The chain crosses the membrane as a helical span at residues 97–119 (DIWLSVDITCCTCSILHLSAIAL). Positions 103 and 107 each coordinate serotonin. The DRY motif; important for ligand-induced conformation changes motif lies at 120 to 122 (DRY). Topologically, residues 120–139 (DRYRAITDAVEYARKRTPKH) are cytoplasmic. Residues 140 to 159 (AGIMITIVWIISVFISMPPL) form a helical membrane-spanning segment. Over 160–178 (FWRHQGTSRDDECIIKHDH) the chain is Extracellular. A helical membrane pass occupies residues 179–202 (IVSTIYSTFGAFYIPLALILILYY). Residues 203–291 (KIYRAAKTLY…KISGTRERKA (89 aa)) lie on the Cytoplasmic side of the membrane. Residues 292–315 (ATTLGLILGAFVICWLPFFVKELV) form a helical membrane-spanning segment. Topologically, residues 316-327 (VNVCDKCKISEE) are extracellular. The chain crosses the membrane as a helical span at residues 328-350 (MSNFLAWLGYLNSLINPLIYTIF). Residues 343–347 (NPLIY) carry the NPxxY motif; important for ligand-induced conformation changes and signaling motif. The Cytoplasmic segment spans residues 351-366 (NEDFKKAFQKLVRCRC).

This sequence belongs to the G-protein coupled receptor 1 family.

It localises to the cell membrane. Its function is as follows. G-protein coupled receptor for 5-hydroxytryptamine (serotonin). Also functions as a receptor for various alkaloids and psychoactive substances. Receptor for lasmiditan, a drug for the treatment of acute migraine. Ligand binding causes a conformation change that triggers signaling via guanine nucleotide-binding proteins (G proteins) and modulates the activity of downstream effectors, such as adenylate cyclase. HTR1F is coupled to G(i)/G(o) G alpha proteins and mediates inhibitory neurotransmission by inhibiting adenylate cyclase activity. The polypeptide is 5-hydroxytryptamine receptor 1F (Homo sapiens (Human)).